Here is a 178-residue protein sequence, read N- to C-terminus: Endothelin-2 (178 aa).

An N-terminal signal peptide occupies residues 1-24 (MPAPGVHHPNTASPFLKTVAAGKG). A propeptide spanning residues 25 to 46 (QVAAAPEHPAPSARARGSHLRP) is cleaved from the precursor. 2 disulfides stabilise this stretch: cysteine 49–cysteine 63 and cysteine 51–cysteine 59. Residues 70 to 178 (VNTPGQTAPY…RPTHPRRRKR (109 aa)) constitute a propeptide that is removed on maturation. An endothelin-like region spans residues 96 to 111 (CECSSGGDPACATFCH). Residues 156–178 (RFPRRPQEAGRQLRPTHPRRRKR) are disordered. The span at 169–178 (RPTHPRRRKR) shows a compositional bias: basic residues.

The protein belongs to the endothelin/sarafotoxin family.

The protein resides in the secreted. Its function is as follows. Endothelins are endothelium-derived vasoconstrictor peptides. The chain is Endothelin-2 (EDN2) from Canis lupus familiaris (Dog).